A 1578-amino-acid chain; its full sequence is FH1/FH2 domain-containing protein 3 (1578 aa).

A GBD/FH3 domain is found at 18–405 (NSTNFPEPSR…DLCEKDEEEE (388 aa)). Disordered stretches follow at residues 324-518 (HEDG…DKLP), 535-824 (SPLL…GVNG), 915-942 (VGRGAISPDVESQDKVPDTPPAQLKTES), 979-1013 (LGHREAPGPPPPPPPTFLGLPPPPPPPLLDSVPPP), 1418-1462 (QQKQ…YAED), 1490-1514 (RTRSRASRGSTSSWTMGTEESPSVT), and 1528-1565 (SATQVPSQRVVPRERKRSRANRKSLRRTLKSGLTPEEA). A phosphoserine mark is found at serine 345 and serine 376. The span at 368–383 (IQNIKSPLSAPTSPCS) shows a compositional bias: polar residues. Positions 399-425 (EKDEEEEEEEEQPITEPNSEEEREDDA) are enriched in acidic residues. Threonine 413 is modified (phosphothreonine). Positions 434–446 (ASSASGQSSPGKD) are enriched in low complexity. A compositionally biased stretch (polar residues) spans 453 to 473 (ALHTTSSPTSQGRWLSASTAA). The segment covering 553–583 (SNFSSNSFQSSRPSPGPSGSPSYASSFSSPQ) has biased composition (low complexity). Over residues 584–598 (DTRSSPSGLLTSSFR) the composition is skewed to polar residues. A coiled-coil region spans residues 597 to 645 (FRQHQESLAAERERRRQEREERLQRIEREERNKFNREYLDKREEQRQAR). Positions 599-651 (QHQESLAAERERRRQEREERLQRIEREERNKFNREYLDKREEQRQARGERYKY) are enriched in basic and acidic residues. Composition is skewed to low complexity over residues 675 to 684 (DLSLDLSLPA) and 692 to 701 (SSQSPSADSQ). The span at 751 to 761 (SQEEPVLELEP) shows a compositional bias: acidic residues. A compositionally biased stretch (basic and acidic residues) spans 762–782 (EERASLSEKERQNEEVNERDN). Residues 784-793 (SASSISSSSS) show a composition bias toward low complexity. Basic and acidic residues predominate over residues 795–809 (LEREEKEDKLSEDRA). Phosphoserine is present on serine 921. Threonine 933 bears the Phosphothreonine mark. The span at 985-1013 (PGPPPPPPPTFLGLPPPPPPPLLDSVPPP) shows a compositional bias: pro residues. The FH1 domain occupies 985–1016 (PGPPPPPPPTFLGLPPPPPPPLLDSVPPPPVP). One can recognise an FH2 domain in the interval 1039 to 1435 (GQPAFTKKKK…HRERNKTRGK (397 aa)). Positions 1420–1434 (KQKRANHRERNKTRG) are enriched in basic residues. Low complexity predominate over residues 1444 to 1456 (SGSSPAAPSQPQG). Residues 1515–1547 (DDAADEIMDRIVKSATQVPSQRVVPRERKRSRA) form the DAD domain. The segment covering 1541-1556 (ERKRSRANRKSLRRTL) has biased composition (basic residues).

Belongs to the formin homology family. Interacts with nestin/NES-based interfilament (IF). Interacts with SQSTM1. In terms of tissue distribution, expressed in the heart, including left ventricle, kidney, brain and skeletal muscle, including soleus and tibialis anterior (at protein level).

It is found in the cytoplasm. The protein localises to the cytoskeleton. It localises to the myofibril. Its subcellular location is the sarcomere. The protein resides in the z line. Functionally, may play a role in actin filament polymerization in cardiomyocytes. Actin-organizing protein that may cause stress fiber formation together with cell elongation. This is FH1/FH2 domain-containing protein 3 (Fhod3) from Mus musculus (Mouse).